A 101-amino-acid polypeptide reads, in one-letter code: MAKTSMKAREAKRAALVAKYAEKRAALKAIINSPESSDDARWDAVLKLQALPRDSSAARQRNRCNQTGRPHGFLRKFGLSRIKLREATMRGEVPGLRKASW.

Belongs to the universal ribosomal protein uS14 family. In terms of assembly, part of the 30S ribosomal subunit. Contacts proteins S3 and S10.

Functionally, binds 16S rRNA, required for the assembly of 30S particles and may also be responsible for determining the conformation of the 16S rRNA at the A site. In Shewanella amazonensis (strain ATCC BAA-1098 / SB2B), this protein is Small ribosomal subunit protein uS14.